Here is a 417-residue protein sequence, read N- to C-terminus: Putative plant UBX domain-containing protein 14 (417 aa).

A UBX domain is found at 335–415 (DRSVVCSICV…GIANSMISVT (81 aa)).

This is Putative plant UBX domain-containing protein 14 from Arabidopsis thaliana (Mouse-ear cress).